A 389-amino-acid chain; its full sequence is Acetate kinase (389 aa).

Asparagine 9 provides a ligand contact to Mg(2+). Lysine 16 is a binding site for ATP. Arginine 77 provides a ligand contact to substrate. Residue aspartate 134 is the Proton donor/acceptor of the active site. ATP-binding positions include histidine 194–glycine 198, aspartate 268–arginine 270, and glycine 316–asparagine 320. Residue glutamate 370 coordinates Mg(2+).

Belongs to the acetokinase family. Homodimer. Requires Mg(2+) as cofactor. The cofactor is Mn(2+).

It localises to the cytoplasm. It catalyses the reaction acetate + ATP = acetyl phosphate + ADP. It functions in the pathway metabolic intermediate biosynthesis; acetyl-CoA biosynthesis; acetyl-CoA from acetate: step 1/2. Functionally, catalyzes the formation of acetyl phosphate from acetate and ATP. Can also catalyze the reverse reaction. The sequence is that of Acetate kinase from Mycolicibacterium vanbaalenii (strain DSM 7251 / JCM 13017 / BCRC 16820 / KCTC 9966 / NRRL B-24157 / PYR-1) (Mycobacterium vanbaalenii).